The primary structure comprises 274 residues: Actin-binding protein Smlt3054 (274 aa).

ANK repeat units follow at residues 192–221 (SGNTPLHHAARFGHFSLVTPLVEAGADVAA) and 225–254 (HGWAPLHLAALHKHARACLHLMAHGANPEQ). Residues 251 to 274 (NPEQPGWRGRTPTRMHRHEQTQAL) form a disordered region.

Exists as a dimer as well as a higher order oligomer.

The protein resides in the secreted. Its subcellular location is the periplasm. In terms of biological role, directly binds F-actin, which results in thickened and distorted F-actin fibers, and affects cellular F-actin localization. Thus, may be a host effector whose function is to disrupt host actin cytoskeletal structure, which may enhance invasion. The protein is Actin-binding protein Smlt3054 of Stenotrophomonas maltophilia (strain K279a).